The chain runs to 230 residues: Orotidine 5'-phosphate decarboxylase (230 aa).

Substrate-binding positions include Asp-11, Lys-34, 61 to 70 (DLKLHDIPNT), Thr-117, Arg-179, Gln-188, Gly-208, and Arg-209. Catalysis depends on Lys-63, which acts as the Proton donor.

Belongs to the OMP decarboxylase family. Type 1 subfamily. As to quaternary structure, homodimer.

It carries out the reaction orotidine 5'-phosphate + H(+) = UMP + CO2. Its pathway is pyrimidine metabolism; UMP biosynthesis via de novo pathway; UMP from orotate: step 2/2. Its function is as follows. Catalyzes the decarboxylation of orotidine 5'-monophosphate (OMP) to uridine 5'-monophosphate (UMP). This chain is Orotidine 5'-phosphate decarboxylase, found in Streptococcus equi subsp. zooepidemicus (strain H70).